Here is a 565-residue protein sequence, read N- to C-terminus: FAD-linked oxidoreductase ZEB1 (565 aa).

The first 27 residues, 1-27 (MKLSPSKYLPVLLGTLSLTIANPSADC), serve as a signal peptide directing secretion. N-linked (GlcNAc...) asparagine glycosylation is found at Asn46, Asn82, and Asn100. The FAD-binding PCMH-type domain occupies 115–293 (LGNYVSYAIA…ISMTVKAHPG (179 aa)). N-linked (GlcNAc...) asparagine glycans are attached at residues Asn340, Asn352, and Asn421.

This sequence belongs to the oxygen-dependent FAD-linked oxidoreductase family.

It functions in the pathway mycotoxin biosynthesis. In terms of biological role, FAD-linked oxidoreductase; part of the gene cluster that mediates the biosynthesis of zearalenone (ZEA), a nonsteroid estrogen that is a contaminant of cereal grains and causes estrogenic disorders in humans and animals. The ZEA backbone is synthesized from a single acetyl-CoA molecule and eight malonyl-CoA molecules. The reducing polyketide synthase ZEA2 is proposed to synthesize a reduced hexaketide intermediate by using different combinations of its reductive domains during each round of condensation. The hexaketide thioester is then transacylated to the non-reducing polyketide synthase ZEA1 and is further condensed with three malonyl-CoAs without reductive tailoring to yield a mixed reduced/unreduced nonaketide. ZEA1 must be able to interact with ZEA2 to facilitate starter-unit acyltransfer and initiate polyketide biosynthesis. ZEA1 also mediates the required C2-C7 cyclization to form the resorcylate core and catalyzes the formation of the macrolactone. ZEB1 is then responsible for the chemical conversion of beta-zearalenonol (beta-ZOL) to ZEA in the biosynthetic pathway. The sequence is that of FAD-linked oxidoreductase ZEB1 from Gibberella zeae (strain ATCC MYA-4620 / CBS 123657 / FGSC 9075 / NRRL 31084 / PH-1) (Wheat head blight fungus).